Reading from the N-terminus, the 190-residue chain is Interferon alpha-11 (190 aa).

A signal peptide spans 1-23; that stretch reads MARLCAFLMILIVMSYWSTCSLG. 2 disulfide bridges follow: Cys24-Cys122 and Cys52-Cys162. N-linked (GlcNAc...) asparagine glycosylation is present at Asn101.

It belongs to the alpha/beta interferon family. Post-translationally, N-glycosylated.

It is found in the secreted. Has antiviral and antiproliferative activities. Produced by macrophages and stimulates the production of two enzymes: a protein kinase and an oligoadenylate synthetase. During viral infection, mediates antiviral effect, either directly by inducing interferon-stimulated genes, either indirectly through stimulation of natural killer cells enabling them to control viral replication. The chain is Interferon alpha-11 (Ifna11) from Mus musculus (Mouse).